Consider the following 78-residue polypeptide: DNA-directed RNA polymerase subunit Rpo5 (78 aa).

The protein belongs to the archaeal Rpo5/eukaryotic RPB5 RNA polymerase subunit family. In terms of assembly, part of the RNA polymerase complex.

It localises to the cytoplasm. The enzyme catalyses RNA(n) + a ribonucleoside 5'-triphosphate = RNA(n+1) + diphosphate. Its function is as follows. DNA-dependent RNA polymerase (RNAP) catalyzes the transcription of DNA into RNA using the four ribonucleoside triphosphates as substrates. This chain is DNA-directed RNA polymerase subunit Rpo5, found in Methanococcus vannielii (strain ATCC 35089 / DSM 1224 / JCM 13029 / OCM 148 / SB).